A 465-amino-acid chain; its full sequence is Dihydrolipoyllysine-residue acetyltransferase component 5 of pyruvate dehydrogenase complex, chloroplastic (465 aa).

The transit peptide at 1 to 31 directs the protein to the chloroplast; it reads MSRLLQTPFLPSVSLPTKTRSSVTGFRVKPR. Residues 39-114 enclose the Lipoyl-binding domain; sequence IREIFMPALS…PVGSAIALLA (76 aa). K80 bears the N6-lipoyllysine mark. The interval 123 to 148 is disordered; sequence AKAKASGGGGGGDSKAPPASPPTAAV. The segment covering 136–148 has biased composition (low complexity); sequence SKAPPASPPTAAV. Residues 184–221 form the Peripheral subunit-binding (PSBD) domain; it reads VASPYAKKLAKELKVELAGLVGSGPMGRIVAKDVEAVA. Residue H438 is part of the active site.

It belongs to the 2-oxoacid dehydrogenase family. It depends on (R)-lipoate as a cofactor.

It is found in the plastid. Its subcellular location is the chloroplast stroma. It carries out the reaction N(6)-[(R)-dihydrolipoyl]-L-lysyl-[protein] + acetyl-CoA = N(6)-[(R)-S(8)-acetyldihydrolipoyl]-L-lysyl-[protein] + CoA. Its function is as follows. The pyruvate dehydrogenase complex catalyzes the overall conversion of pyruvate to acetyl-CoA and CO(2). It contains multiple copies of three enzymatic components: pyruvate dehydrogenase (E1), dihydrolipoamide acetyltransferase (E2) and lipoamide dehydrogenase (E3). This chain is Dihydrolipoyllysine-residue acetyltransferase component 5 of pyruvate dehydrogenase complex, chloroplastic (EMB3003), found in Arabidopsis thaliana (Mouse-ear cress).